A 672-amino-acid chain; its full sequence is NADPH-Fe(3+) oxidoreductase subunit beta (672 aa).

Residues Cys203, Cys207, Cys211, and Cys215 each coordinate [4Fe-4S] cluster. Position 254–283 (254–283 (KKVAIVGAGPAGLACAYYLALEGYPCTIYE)) interacts with FAD. 388 to 421 (GKKVVVVGGGNTAIDCVRVALREGAEESTLLYRR) lines the NADP(+) pocket. 552-562 (TDLEGVFAGGD) contributes to the FAD binding site.

As to quaternary structure, heterotetramer with 2 alpha subunits. [4Fe-4S] cluster is required as a cofactor. Requires FAD as cofactor.

The protein resides in the cell membrane. Probably involved in acetate metabolism and not in the reduction of Fe(3+) chelates. May serve as a major route for NADP regeneration. In Geobacter sulfurreducens (strain DL-1 / KN400), this protein is NADPH-Fe(3+) oxidoreductase subunit beta (sfrB).